The sequence spans 471 residues: Proton-coupled amino acid transporter-like protein pathetic (471 aa).

Residue N61 is glycosylated (N-linked (GlcNAc...) asparagine). Helical transmembrane passes span 81–101, 153–173, 187–207, 216–236, 253–273, 283–303, 337–357, 375–395, 397–417, and 432–452; these read FAFM…TAFI, ILFG…VIVA, AVSL…IAWV, VSMV…YYLV, LPQF…VMPL, FLGI…IYML, LISL…LEII, VLRT…PTIG, FMGL…PVVI, and WILW…VFGT.

The protein belongs to the amino acid/polyamine transporter 2 family. In third instar larvae, expressed at highest levels in the brain and digestive system with particularly high levels in surface glia of the brain (at protein level). In third instar larvae, expressed in all cells of the body wall (at protein level). Within the body wall of third instar larvae, most highly expressed in epithelial cells and sensory neurons. Expressed at a similar level in all da neurons (at protein level). Widely expressed during embryonic and late larval stages. Levels are highly dynamic in embryogenesis with surges of expression in many structures, including muscle primordia, salivary glands, proventriculus, trachea and gonads. Expressed in all or most cells of larval imaginal disks. Expression is also particularly strong in the pouch and hinge regions of the wing disk and in the morphogenetic furrow of the eye disk.

The protein resides in the cell membrane. Its subcellular location is the lysosome membrane. It localises to the late endosome membrane. It is found in the cell projection. The protein localises to the axon. The protein resides in the dendrite. Its subcellular location is the perikaryon. It localises to the cytoplasm. Its function is as follows. Amino acid transporter which has pH-dependent electrogenic transport activity for alanine and glycine but not for proline. Plays a role in positive regulation of growth by directly or indirectly modulating the effects of the TOR signaling pathway. Required in a cell-autonomous manner for dendrite growth in neurons with large dendrite arbors. This Drosophila melanogaster (Fruit fly) protein is Proton-coupled amino acid transporter-like protein pathetic.